Reading from the N-terminus, the 652-residue chain is Phosphomethylpyrimidine synthase (652 aa).

2 disordered regions span residues 1–45 (MVSR…SVSA) and 118–166 (QRGD…LDGR). The span at 8–45 (SSSSTSKAVTSSPSTSSLSSAASSPSVSSSSSSSSVSA) shows a compositional bias: low complexity. The segment covering 134–162 (GASGPGTLGSGTPGSGTPGSGPLGLGGTD) has biased composition (gly residues). Residues N245, M274, Y303, H339, 359–361 (SRG), 400–403 (DGLR), and E439 contribute to the substrate site. Residue H443 coordinates Zn(2+). A substrate-binding site is contributed by Y466. H507 is a binding site for Zn(2+). [4Fe-4S] cluster is bound by residues C587, C590, and C595.

The protein belongs to the ThiC family. [4Fe-4S] cluster serves as cofactor.

It carries out the reaction 5-amino-1-(5-phospho-beta-D-ribosyl)imidazole + S-adenosyl-L-methionine = 4-amino-2-methyl-5-(phosphooxymethyl)pyrimidine + CO + 5'-deoxyadenosine + formate + L-methionine + 3 H(+). It participates in cofactor biosynthesis; thiamine diphosphate biosynthesis. Catalyzes the synthesis of the hydroxymethylpyrimidine phosphate (HMP-P) moiety of thiamine from aminoimidazole ribotide (AIR) in a radical S-adenosyl-L-methionine (SAM)-dependent reaction. This is Phosphomethylpyrimidine synthase from Frankia casuarinae (strain DSM 45818 / CECT 9043 / HFP020203 / CcI3).